Here is a 549-residue protein sequence, read N- to C-terminus: 65-kDa microtubule-associated protein 9 (549 aa).

3 coiled-coil regions span residues 36–123 (IEIE…ERKI), 160–199 (SLRK…CSVL), and 459–492 (GNRL…HQGQ). The segment at 474–549 (EEKEQERRRK…SFSTPLSRHG (76 aa)) is disordered. A compositionally biased stretch (basic residues) spans 481 to 490 (RRKRDLKKHQ). Phosphoserine occurs at positions 501 and 546. Polar residues predominate over residues 514–549 (VSTNKRFVSSPHTPQTDSPHSAKSNQSFSTPLSRHG).

The protein belongs to the MAP65/ASE1 family. As to quaternary structure, forms dimer. Binds to microtubules (MT).

Its subcellular location is the nucleus. It localises to the cytoplasm. It is found in the cytoskeleton. The protein resides in the spindle pole. The chain is 65-kDa microtubule-associated protein 9 (MAP65-9) from Arabidopsis thaliana (Mouse-ear cress).